A 301-amino-acid polypeptide reads, in one-letter code: 3-methyl-2-oxobutanoate hydroxymethyltransferase (301 aa).

Positions 1 to 12 (MAPSNLPESTTP) are enriched in polar residues. The disordered stretch occupies residues 1 to 24 (MAPSNLPESTTPAEVPAPYGTGPA). Residues Asp82 and Asp121 each contribute to the Mg(2+) site. Residues 82–83 (DS), Asp121, and Lys151 contribute to the 3-methyl-2-oxobutanoate site. Glu153 contacts Mg(2+). The Proton acceptor role is filled by Glu219.

This sequence belongs to the PanB family. As to quaternary structure, homodecamer; pentamer of dimers. Mg(2+) serves as cofactor.

The protein localises to the cytoplasm. The catalysed reaction is 3-methyl-2-oxobutanoate + (6R)-5,10-methylene-5,6,7,8-tetrahydrofolate + H2O = 2-dehydropantoate + (6S)-5,6,7,8-tetrahydrofolate. It participates in cofactor biosynthesis; (R)-pantothenate biosynthesis; (R)-pantoate from 3-methyl-2-oxobutanoate: step 1/2. In terms of biological role, catalyzes the reversible reaction in which hydroxymethyl group from 5,10-methylenetetrahydrofolate is transferred onto alpha-ketoisovalerate to form ketopantoate. In Paenarthrobacter aurescens (strain TC1), this protein is 3-methyl-2-oxobutanoate hydroxymethyltransferase.